Here is an 88-residue protein sequence, read N- to C-terminus: Large ribosomal subunit protein bL27 (88 aa).

The interval 1 to 20 (MASKKGVGSTKDGRDSIAKR) is disordered.

The protein belongs to the bacterial ribosomal protein bL27 family.

This chain is Large ribosomal subunit protein bL27 (rpmA), found in Geobacillus stearothermophilus (Bacillus stearothermophilus).